We begin with the raw amino-acid sequence, 379 residues long: Carbamoyl phosphate synthase small chain (379 aa).

A CPSase region spans residues 1-184; the sequence is MVSLYLENGL…LDYKPFDEKN (184 aa). L-glutamine contacts are provided by serine 44, glycine 240, and glycine 242. Residues 188–378 enclose the Glutamine amidotransferase type-1 domain; the sequence is TIAVLDFGAK…VKLLENFPTR (191 aa). The Nucleophile role is filled by cysteine 268. L-glutamine is bound by residues leucine 269, glutamine 272, asparagine 310, and tyrosine 313. Residues histidine 351 and glutamate 353 contribute to the active site.

It belongs to the CarA family. Composed of two chains; the small (or glutamine) chain promotes the hydrolysis of glutamine to ammonia, which is used by the large (or ammonia) chain to synthesize carbamoyl phosphate. Tetramer of heterodimers (alpha,beta)4.

The enzyme catalyses hydrogencarbonate + L-glutamine + 2 ATP + H2O = carbamoyl phosphate + L-glutamate + 2 ADP + phosphate + 2 H(+). It carries out the reaction L-glutamine + H2O = L-glutamate + NH4(+). The protein operates within amino-acid biosynthesis; L-arginine biosynthesis; carbamoyl phosphate from bicarbonate: step 1/1. It participates in pyrimidine metabolism; UMP biosynthesis via de novo pathway; (S)-dihydroorotate from bicarbonate: step 1/3. In terms of biological role, small subunit of the glutamine-dependent carbamoyl phosphate synthetase (CPSase). CPSase catalyzes the formation of carbamoyl phosphate from the ammonia moiety of glutamine, carbonate, and phosphate donated by ATP, constituting the first step of 2 biosynthetic pathways, one leading to arginine and/or urea and the other to pyrimidine nucleotides. The small subunit (glutamine amidotransferase) binds and cleaves glutamine to supply the large subunit with the substrate ammonia. The sequence is that of Carbamoyl phosphate synthase small chain from Helicobacter acinonychis (strain Sheeba).